The sequence spans 443 residues: Glucose-6-phosphate isomerase (443 aa).

E285 (proton donor) is an active-site residue. Residues H306 and K420 contribute to the active site.

The protein belongs to the GPI family.

It localises to the cytoplasm. It catalyses the reaction alpha-D-glucose 6-phosphate = beta-D-fructose 6-phosphate. Its pathway is carbohydrate biosynthesis; gluconeogenesis. It participates in carbohydrate degradation; glycolysis; D-glyceraldehyde 3-phosphate and glycerone phosphate from D-glucose: step 2/4. Functionally, catalyzes the reversible isomerization of glucose-6-phosphate to fructose-6-phosphate. The sequence is that of Glucose-6-phosphate isomerase from Staphylococcus epidermidis (strain ATCC 12228 / FDA PCI 1200).